A 358-amino-acid chain; its full sequence is Type II methyltransferase M.HpaII (358 aa).

One can recognise an SAM-dependent MTase C5-type domain in the interval F32–L356. C103 is a catalytic residue.

This sequence belongs to the class I-like SAM-binding methyltransferase superfamily. C5-methyltransferase family. As to quaternary structure, monomer.

The enzyme catalyses a 2'-deoxycytidine in DNA + S-adenosyl-L-methionine = a 5-methyl-2'-deoxycytidine in DNA + S-adenosyl-L-homocysteine + H(+). A methylase that recognizes the double-stranded sequence 5'-CCGG-3', methylates C-2 on both strands, and protects the DNA from cleavage by the HpaII endonuclease. The polypeptide is Type II methyltransferase M.HpaII (Haemophilus parainfluenzae).